We begin with the raw amino-acid sequence, 45 residues long: Large ribosomal subunit protein bL34c (45 aa).

It belongs to the bacterial ribosomal protein bL34 family.

It is found in the plastid. The protein resides in the chloroplast. This is Large ribosomal subunit protein bL34c from Emiliania huxleyi (Coccolithophore).